The primary structure comprises 101 residues: DET1- and DDB1-associated protein 1 (101 aa).

The interval 67–101 (NAAKKRDQDQLEIGETSAPPRKIARTDSQEMSEDT) is disordered.

The protein belongs to the DDA1 family. Component of numerous DCX (DDB1-CUL4-X-box) E3 ubiquitin-protein ligase complexes which consist of a core of DDB1, cullin-4 (CUL4A or CUL4B), DDA1 and RBX1.

It functions in the pathway protein modification; protein ubiquitination. In terms of biological role, functions as a component of numerous distinct DCX (DDB1-CUL4-X-box) E3 ubiquitin-protein ligase complexes which mediate the ubiquitination and subsequent proteasomal degradation of target proteins. In the DCX complexes, acts as a scaffolding subunit required to stabilize the complex. This chain is DET1- and DDB1-associated protein 1, found in Xenopus tropicalis (Western clawed frog).